Consider the following 389-residue polypeptide: Cytochrome b (389 aa).

Helical transmembrane passes span Phe-32–Met-52, Trp-76–Ala-98, Thr-113–Thr-133, and Phe-179–Ile-199. Heme b contacts are provided by His-82 and His-96. Residues His-183 and His-197 each coordinate heme b. His-202 serves as a coordination point for a ubiquinone. Transmembrane regions (helical) follow at residues Tyr-225–Phe-245, Leu-289–Asp-309, Ile-321–Ala-341, and Tyr-348–Pro-368.

It belongs to the cytochrome b family. Fungal cytochrome b-c1 complex contains 10 subunits; 3 respiratory subunits, 2 core proteins and 5 low-molecular weight proteins. Cytochrome b-c1 complex is a homodimer. Heme b is required as a cofactor.

The protein localises to the mitochondrion inner membrane. Functionally, component of the ubiquinol-cytochrome c reductase complex (complex III or cytochrome b-c1 complex) that is part of the mitochondrial respiratory chain. The b-c1 complex mediates electron transfer from ubiquinol to cytochrome c. Contributes to the generation of a proton gradient across the mitochondrial membrane that is then used for ATP synthesis. The sequence is that of Cytochrome b (cob) from Schizosaccharomyces japonicus (Fission yeast).